A 356-amino-acid chain; its full sequence is Cysteine proteinase 3 (356 aa).

Positions 1–16 (MSRLSLVLILVAGLFA) are cleaved as a signal peptide. A propeptide spans 17 to 138 (TALAGPATFA…KGNLKLTNVV (122 aa)) (activation peptide). An N-linked (GlcNAc...) asparagine glycan is attached at Asn-123. Cystine bridges form between Cys-160/Cys-203 and Cys-194/Cys-236. The active site involves Cys-163. N-linked (GlcNAc...) asparagine glycosylation occurs at Asn-252. Residues Cys-294 and Cys-344 are joined by a disulfide bond. Active-site residues include His-303 and Asn-323.

The protein belongs to the peptidase C1 family. In terms of tissue distribution, predominantly expressed in stem and root.

Its subcellular location is the vacuole. The protein is Cysteine proteinase 3 (CYP-3) of Solanum lycopersicum (Tomato).